The primary structure comprises 141 residues: Large ribosomal subunit protein uL11 (141 aa).

It belongs to the universal ribosomal protein uL11 family. In terms of assembly, part of the ribosomal stalk of the 50S ribosomal subunit. Interacts with L10 and the large rRNA to form the base of the stalk. L10 forms an elongated spine to which L12 dimers bind in a sequential fashion forming a multimeric L10(L12)X complex. One or more lysine residues are methylated.

Forms part of the ribosomal stalk which helps the ribosome interact with GTP-bound translation factors. The protein is Large ribosomal subunit protein uL11 of Geobacter sulfurreducens (strain ATCC 51573 / DSM 12127 / PCA).